The chain runs to 139 residues: Plastocyanin (139 aa).

Residues 1 to 34 (MKLIAASLRRLSLAVLTVLLVVSSFAVFTPSAAA) form the signal peptide. One can recognise a Plastocyanin-like domain in the interval 35-135 (ETYTVKLGSD…HRGAGMVGKI (101 aa)). Residues histidine 73, cysteine 123, histidine 126, and methionine 131 each contribute to the Cu cation site.

The protein belongs to the plastocyanin family. The cofactor is Cu(2+).

The protein localises to the cellular thylakoid membrane. Its function is as follows. Participates in electron transfer between P700 and the cytochrome b6-f complex in photosystem I. The polypeptide is Plastocyanin (petE) (Trichormus variabilis (strain ATCC 29413 / PCC 7937) (Anabaena variabilis)).